Consider the following 253-residue polypeptide: MAAAFRKAVKSRQREYRERSQPGFRKHLGLLEKKKDYKLRADDYRKKQEYLKALRKKALEKNPDEFYYKMTRVKLQDGVHIIKETKEEVTPEQLKLMRTQDVKYIEMKRVAEAKKIERLKSELHLLDFQGKQQNRHVFFFDTKKEVEQFDVAAHLQTAPELVDRVFNRPRIETLQKEKVKGVTNQTGLKRIAKERQKQYNCLTQRIEREKKLFVIAQKIQTRKDLMDKTQKVKVKKETVNSPAIYKFQSRRKR.

Residues 1-21 (MAAAFRKAVKSRQREYRERSQ) form a disordered region. Residues Lys74, Lys83, and Lys86 each participate in a glycyl lysine isopeptide (Lys-Gly) (interchain with G-Cter in SUMO2) cross-link. Thr90 is modified (phosphothreonine). Glycyl lysine isopeptide (Lys-Gly) (interchain with G-Cter in SUMO2) cross-links involve residues Lys103, Lys120, Lys143, Lys144, Lys180, Lys211, Lys218, Lys235, and Lys236. Ser241 is subject to Phosphoserine. Lys246 participates in a covalent cross-link: Glycyl lysine isopeptide (Lys-Gly) (interchain with G-Cter in SUMO2).

This sequence belongs to the UTP11 family. In terms of assembly, part of the small subunit (SSU) processome, composed of more than 70 proteins and the RNA chaperone small nucleolar RNA (snoRNA) U3.

It is found in the nucleus. It localises to the nucleolus. Part of the small subunit (SSU) processome, first precursor of the small eukaryotic ribosomal subunit. During the assembly of the SSU processome in the nucleolus, many ribosome biogenesis factors, an RNA chaperone and ribosomal proteins associate with the nascent pre-rRNA and work in concert to generate RNA folding, modifications, rearrangements and cleavage as well as targeted degradation of pre-ribosomal RNA by the RNA exosome. Involved in nucleolar processing of pre-18S ribosomal RNA. The sequence is that of Probable U3 small nucleolar RNA-associated protein 11 from Rattus norvegicus (Rat).